The following is a 1919-amino-acid chain: Disks large homolog 5 (1919 aa).

A disordered region spans residues 98 to 142 (AEGAGSTYSVLSTMPSDSESSSSLSSVGTTGKAPSPPPLLTDQQV). Residues 109 to 123 (STMPSDSESSSSLSS) show a composition bias toward low complexity. Phosphoserine is present on residues S264 and S295. Positions 383-599 (LNKATAQNKD…LEKEARFRQL (217 aa)) form a coiled coil. PDZ domains are found at residues 620-710 (VVEF…RRRK) and 705-796 (VVRR…LKVF). Position 900 is a phosphoserine (S900). 5 disordered regions span residues 927–1122 (GVGE…FRPK), 1150–1187 (QEWAPYSPGHSSRHSNPPLYPSRPSVGTVPRSLTPSTT), 1201–1230 (SHRVGPCSSPPAARDAGPQGLHPSVQHQGR), 1245–1264 (EMRATHGSNSLPSSARLGSS), and 1271–1306 (AERIKIPSTPRYPRSVVGSERGSVSHSECSTPPQSP). The residue at position 984 (T984) is a Phosphothreonine. Position 1000 is a phosphoserine (S1000). T1011 is modified (phosphothreonine). The span at 1017–1030 (RRSDSIKFQHRLET) shows a compositional bias: basic and acidic residues. Phosphoserine is present on S1021. Residues 1045–1055 (TSPPSALPPDV) are compositionally biased toward pro residues. T1183 bears the Phosphothreonine mark. 2 positions are modified to phosphoserine: S1209 and S1263. 2 stretches are compositionally biased toward low complexity: residues 1252–1264 (SNSLPSSARLGSS) and 1284–1298 (RSVVGSERGSVSHSE). S1334 is subject to Phosphoserine. Residues 1350–1429 (HVKVQKGSEP…TITILAQYNP (80 aa)) enclose the PDZ 3 domain. A disordered region spans residues 1434–1493 (LSSHSRSSSHLDPAGTHSTLQGSGTTTPEHPSVIDPLMEQDEGPSTPPAKQSSSRIAGDA). Positions 1449–1462 (THSTLQGSGTTTPE) are enriched in polar residues. Residues 1501 to 1582 (RVVFIKKSQL…GVRLKVQYRP (82 aa)) form the PDZ 4 domain. Residues 1593 to 1661 (GDSFYIRALY…PSKYVMDQEF (69 aa)) enclose the SH3 domain. Position 1666 is a phosphoserine (S1666). In terms of domain architecture, Guanylate kinase-like spans 1722–1905 (DSVSLAYQRV…ICTQILAMVN (184 aa)).

It belongs to the MAGUK family. In terms of assembly, interacts with MPP1. Interacts with CTNNB1 and with the third SH3 domain of SORBS3 to form a ternary complex. Interacts (via coiled-coil domain) with MARK3. Interacts (via PDZ domain 3) with STK3/MST2 and STK4/MST1. Interacts with SCRIB. Interacts with CTNB1, SMO and (via PDZ4 or guanylate kinase-like domain) with KIF7. Highly expressed in normal breast tissues and low-grade breast cancer tissues (at protein level). Highly expressed in the placenta and prostate. Expressed at a lower level in the thyroid, spinal cord, trachea, adrenal gland, skeletal muscle, pancreas, heart, brain, liver and kidney. A short splice product shows more limited expression, being absent from at least the brain.

The protein localises to the cell junction. The protein resides in the cell membrane. Its subcellular location is the postsynaptic density. It localises to the cytoplasm. It is found in the cytoskeleton. The protein localises to the cilium basal body. In terms of biological role, acts as a regulator of the Hippo signaling pathway. Negatively regulates the Hippo signaling pathway by mediating the interaction of MARK3 with STK3/4, bringing them together to promote MARK3-dependent hyperphosphorylation and inactivation of STK3 kinase activity toward LATS1. Positively regulates the Hippo signaling pathway by mediating the interaction of SCRIB with STK4/MST1 and LATS1 which is important for the activation of the Hippo signaling pathway. Involved in regulating cell proliferation, maintenance of epithelial polarity, epithelial-mesenchymal transition (EMT), cell migration and invasion. Plays an important role in dendritic spine formation and synaptogenesis in cortical neurons; regulates synaptogenesis by enhancing the cell surface localization of N-cadherin. Acts as a positive regulator of hedgehog (Hh) signaling pathway. Plays a critical role in the early point of the SMO activity cycle by interacting with SMO at the ciliary base to induce the accumulation of KIF7 and GLI2 at the ciliary tip for GLI2 activation. The polypeptide is Disks large homolog 5 (DLG5) (Homo sapiens (Human)).